The chain runs to 51 residues: UPF0181 protein HAPS_0710 (51 aa).

Belongs to the UPF0181 family.

The chain is UPF0181 protein HAPS_0710 from Glaesserella parasuis serovar 5 (strain SH0165) (Haemophilus parasuis).